Reading from the N-terminus, the 443-residue chain is tRNA (guanine-N(7)-)-methyltransferase non-catalytic subunit TRM82 (443 aa).

The tract at residues alanine 67–proline 93 is disordered. WD repeat units lie at residues proline 97–isoleucine 137, glycine 193–lysine 235, and glycine 239–lysine 279.

The protein belongs to the WD repeat TRM82 family. Forms a heterodimer with the catalytic subunit TRM8.

The protein resides in the nucleus. It functions in the pathway tRNA modification; N(7)-methylguanine-tRNA biosynthesis. Functionally, required for the formation of N(7)-methylguanine at position 46 (m7G46) in tRNA. In the complex, it is required to stabilize and induce conformational changes of the catalytic subunit. The chain is tRNA (guanine-N(7)-)-methyltransferase non-catalytic subunit TRM82 from Kluyveromyces lactis (strain ATCC 8585 / CBS 2359 / DSM 70799 / NBRC 1267 / NRRL Y-1140 / WM37) (Yeast).